An 831-amino-acid polypeptide reads, in one-letter code: Sodium/hydrogen exchanger 3 (831 aa).

The signal sequence occupies residues 1–28 (MWHPALGPGWKPLLALALALTSLRGVRG). Residues 29-48 (IEEEPNSGGSFQIVTFKWHH) are Extracellular-facing. The helical transmembrane segment at 49 to 71 (VQDPYIIALWILVASLAKIVFHL) threads the bilayer. At 72-79 (SHKVTSVV) the chain is on the cytoplasmic side. A helical transmembrane segment spans residues 80–99 (PESALLIVLGLVLGGIVWAA). Over 100–108 (DHIASFTLT) the chain is Extracellular. The helical transmembrane segment at 109-126 (PTLFFFYLLPPIVLDAGY) threads the bilayer. Over 127–129 (FMP) the chain is Cytoplasmic. The helical transmembrane segment at 130 to 165 (NRLFFGNLGTILLYAVIGTIWNAATTGLSLYGVFLS) threads the bilayer. Residues glycine 135, glycine 138, and threonine 139 each coordinate a 1,2-diacyl-sn-glycero-3-phospho-(1D-myo-inositol). The Extracellular segment spans residues 166-178 (GLMGELKIGLLDF). A helical membrane pass occupies residues 179-200 (LLFGSLIAAVDPVAVLAVFEEV). Residues 201–202 (HV) are Cytoplasmic-facing. The chain crosses the membrane as a helical span at residues 203-234 (NEVLFIIVFGESLLNDAVTVVLYNVFESFVTL). At 235–241 (GGDAVTG) the chain is on the extracellular side. The helical transmembrane segment at 242-276 (VDCVKGIVSFFVVSLGGTLVGVIFAFLLSLVTRFT) threads the bilayer. Residues 277-278 (KH) are Cytoplasmic-facing. Residues 279 to 301 (VRIIEPGFVFVISYLSYLTSEML) traverse the membrane as a helical segment. The Extracellular segment spans residues 302 to 303 (SL). Residues 304–320 (SAILAITFCGICCQKYV) form a helical membrane-spanning segment. Residues 321-327 (KANISEQ) are Cytoplasmic-facing. A helical membrane pass occupies residues 328-356 (SATTVRYTMKMLASGAETIIFMFLGISAV). The Extracellular portion of the chain corresponds to 357 to 364 (DPVIWTWN). The chain crosses the membrane as a helical span at residues 365-386 (TAFVLLTLVFISVYRAIGVVLQ). Residues 387–399 (TWILNRYRMVQLE) are Cytoplasmic-facing. Methionine 395 contacts a 1,2-diacyl-sn-glycero-3-phospho-(1D-myo-inositol). Residues 400–423 (TIDQVVMSYGGLRGAVAYALVVLL) traverse the membrane as a helical segment. At 424-430 (DEKKVKE) the chain is on the extracellular side. The chain crosses the membrane as a helical span at residues 431 to 464 (KNLFVSTTLIVVFFTVIFQGLTIKPLVQWLKVKR). At 465–831 (SEQREPKLNE…QPASPESTHM (367 aa)) the chain is on the cytoplasmic side. The a 1,2-diacyl-sn-glycero-3-phospho-(1D-myo-inositol) site is built by glutamine 494, isoleucine 495, and histidine 497. A phosphoserine mark is found at serine 552 and serine 560. The interaction with EZR stretch occupies residues 573–587 (RPSTVEASVSYFLRE). An interaction with NHERF4 region spans residues 588-665 (NVSAVCLDMQ…RKRLESFKSA (78 aa)). An interaction with AHCYL1 region spans residues 589-693 (VSAVCLDMQS…AQKRRNSSIP (105 aa)). Phosphoserine is present on residues serine 590 and serine 605. At serine 661 the chain carries Phosphoserine; by SGK1. Serine 716, serine 807, and serine 810 each carry phosphoserine. The interval 808 to 831 (VDSFLQADGPEEQLQPASPESTHM) is disordered. Positions 822 to 831 (QPASPESTHM) are enriched in polar residues.

Belongs to the monovalent cation:p,roton antiporter 1 (CPA1) transporter (TC 2.A.36) family. As to quaternary structure, homodimer. Found in the forms of complex and dynamic macromolecular complexes. Binds NHERF1 and NHERF2. Interacts with NHERF4 and interactions decrease in response to elevated calcium ion levels. Interacts with PDZK1 (via C-terminal PDZ domain). Interacts with CHP1; this interaction increases trafficking and activity at the plasma membrane of SLC9A3. Interacts with CHP2 and SHANK2. Interacts with AHCYL1; the interaction is required for SLC9A3 activity. Interacts with EZR; interaction targets SLC9A3 to the apical membrane. Interacts with SNX27 (via PDZ domains); directs SLC9A3 membrane insertion from early endosomes to the plasma membrane. In terms of processing, phosphorylated by PRKACA at Ser-552 and Ser-605, which inhibits activity. Phosphorylation of Ser-605 is essential for cAMP-mediated inhibition of SLC9A3. Phosphorylation at Ser-661 by SGK1 is associated with increased abundance at the cell membrane. Phosphorylation at Ser-716 by CSNK2A1 regulates SLC9A3 activity through the formation of multiple signaling complexes. Most abundant in colon and small intestine, followed by kidney and stomach. In kidney, expressed in proximal tubules and outer medulla (at protein level).

The protein resides in the apical cell membrane. It is found in the cell membrane. Its subcellular location is the recycling endosome membrane. The protein localises to the early endosome membrane. The enzyme catalyses Na(+)(in) + H(+)(out) = Na(+)(out) + H(+)(in). Its activity is regulated as follows. Seems to switch between active and inactive modes in response to various stimuli. Activated directly or indirectly by membrane phosphatidylinositol (PIs). Regulated by a variety of auxiliary proteins, which facilitate the maturation, cell surface expression and function of the transporter. Inhibited specifically by the drug tenapanor. In terms of biological role, plasma membrane Na(+)/H(+) antiporter. Exchanges intracellular H(+) ions for extracellular Na(+) in 1:1 stoichiometry, playing a key role in salt and fluid absorption and pH homeostasis. Major apical Na(+)/H(+) exchanger in kidney and intestine playing an important role in renal and intestine Na(+) absorption and blood pressure regulation. The protein is Sodium/hydrogen exchanger 3 (Slc9a3) of Rattus norvegicus (Rat).